The primary structure comprises 423 residues: Mannitol-1-phosphate 5-dehydrogenase (423 aa).

The Zn(2+) site is built by cysteine 40, histidine 69, and glutamate 70.

The protein belongs to the zinc-containing alcohol dehydrogenase family. Zn(2+) serves as cofactor.

It carries out the reaction D-mannitol 1-phosphate + NAD(+) = beta-D-fructose 6-phosphate + NADH + H(+). Seems to be involved in mannitol utilization. Complements an E.coli mtlD deletion mutant. This is Mannitol-1-phosphate 5-dehydrogenase from Aliivibrio fischeri (strain ATCC 700601 / ES114) (Vibrio fischeri).